The sequence spans 138 residues: Putative pre-16S rRNA nuclease (138 aa).

The protein belongs to the YqgF nuclease family.

The protein localises to the cytoplasm. Functionally, could be a nuclease involved in processing of the 5'-end of pre-16S rRNA. This is Putative pre-16S rRNA nuclease from Bacteroides fragilis (strain ATCC 25285 / DSM 2151 / CCUG 4856 / JCM 11019 / LMG 10263 / NCTC 9343 / Onslow / VPI 2553 / EN-2).